The chain runs to 283 residues: Bifunctional protein FolD (283 aa).

Residues 166 to 168 (GAS) and Ile-232 each bind NADP(+).

Belongs to the tetrahydrofolate dehydrogenase/cyclohydrolase family. In terms of assembly, homodimer.

The enzyme catalyses (6R)-5,10-methylene-5,6,7,8-tetrahydrofolate + NADP(+) = (6R)-5,10-methenyltetrahydrofolate + NADPH. It carries out the reaction (6R)-5,10-methenyltetrahydrofolate + H2O = (6R)-10-formyltetrahydrofolate + H(+). Its pathway is one-carbon metabolism; tetrahydrofolate interconversion. Functionally, catalyzes the oxidation of 5,10-methylenetetrahydrofolate to 5,10-methenyltetrahydrofolate and then the hydrolysis of 5,10-methenyltetrahydrofolate to 10-formyltetrahydrofolate. This chain is Bifunctional protein FolD, found in Wigglesworthia glossinidia brevipalpis.